A 524-amino-acid chain; its full sequence is Histidine ammonia-lyase (524 aa).

The segment at residues 139–141 (ASG) is a cross-link (5-imidazolinone (Ala-Gly)). At serine 140 the chain carries 2,3-didehydroalanine (Ser). Positions 500-524 (ADTQAPAPAKLPDSGDEDRDTTSRH) are disordered.

Belongs to the PAL/histidase family. Contains an active site 4-methylidene-imidazol-5-one (MIO), which is formed autocatalytically by cyclization and dehydration of residues Ala-Ser-Gly.

It localises to the cytoplasm. It catalyses the reaction L-histidine = trans-urocanate + NH4(+). The protein operates within amino-acid degradation; L-histidine degradation into L-glutamate; N-formimidoyl-L-glutamate from L-histidine: step 1/3. The protein is Histidine ammonia-lyase (hutH) of Deinococcus radiodurans (strain ATCC 13939 / DSM 20539 / JCM 16871 / CCUG 27074 / LMG 4051 / NBRC 15346 / NCIMB 9279 / VKM B-1422 / R1).